A 428-amino-acid chain; its full sequence is Gamma-glutamyl phosphate reductase (428 aa).

Belongs to the gamma-glutamyl phosphate reductase family.

The protein localises to the cytoplasm. The enzyme catalyses L-glutamate 5-semialdehyde + phosphate + NADP(+) = L-glutamyl 5-phosphate + NADPH + H(+). It functions in the pathway amino-acid biosynthesis; L-proline biosynthesis; L-glutamate 5-semialdehyde from L-glutamate: step 2/2. Functionally, catalyzes the NADPH-dependent reduction of L-glutamate 5-phosphate into L-glutamate 5-semialdehyde and phosphate. The product spontaneously undergoes cyclization to form 1-pyrroline-5-carboxylate. The chain is Gamma-glutamyl phosphate reductase from Chromohalobacter salexigens (strain ATCC BAA-138 / DSM 3043 / CIP 106854 / NCIMB 13768 / 1H11).